We begin with the raw amino-acid sequence, 184 residues long: Ribosome-recycling factor (184 aa).

Belongs to the RRF family.

Its subcellular location is the cytoplasm. Responsible for the release of ribosomes from messenger RNA at the termination of protein biosynthesis. May increase the efficiency of translation by recycling ribosomes from one round of translation to another. The protein is Ribosome-recycling factor of Stenotrophomonas maltophilia (strain R551-3).